The chain runs to 179 residues: ATP synthase subunit b (179 aa).

Residues 23–43 (IFWLIITFGILYVVLSKLILP) traverse the membrane as a helical segment.

This sequence belongs to the ATPase B chain family. F-type ATPases have 2 components, F(1) - the catalytic core - and F(0) - the membrane proton channel. F(1) has five subunits: alpha(3), beta(3), gamma(1), delta(1), epsilon(1). F(0) has three main subunits: a(1), b(2) and c(10-14). The alpha and beta chains form an alternating ring which encloses part of the gamma chain. F(1) is attached to F(0) by a central stalk formed by the gamma and epsilon chains, while a peripheral stalk is formed by the delta and b chains.

The protein localises to the cell inner membrane. Its function is as follows. F(1)F(0) ATP synthase produces ATP from ADP in the presence of a proton or sodium gradient. F-type ATPases consist of two structural domains, F(1) containing the extramembraneous catalytic core and F(0) containing the membrane proton channel, linked together by a central stalk and a peripheral stalk. During catalysis, ATP synthesis in the catalytic domain of F(1) is coupled via a rotary mechanism of the central stalk subunits to proton translocation. Functionally, component of the F(0) channel, it forms part of the peripheral stalk, linking F(1) to F(0). The sequence is that of ATP synthase subunit b from Pelagibacter ubique (strain HTCC1062).